The chain runs to 104 residues: UPF0235 protein RBE_0633 (104 aa).

It belongs to the UPF0235 family.

The chain is UPF0235 protein RBE_0633 from Rickettsia bellii (strain RML369-C).